The primary structure comprises 672 residues: DNA ligase (672 aa).

Residues 37–41 (DAEYD), 86–87 (SL), and Glu115 each bind NAD(+). The active-site N6-AMP-lysine intermediate is Lys117. Arg138, Glu172, Lys288, and Lys312 together coordinate NAD(+). 4 residues coordinate Zn(2+): Cys406, Cys409, Cys424, and Cys429. Positions 590-672 (DISSTFAGKT…LQEIQQSKQV (83 aa)) constitute a BRCT domain.

Belongs to the NAD-dependent DNA ligase family. LigA subfamily. It depends on Mg(2+) as a cofactor. Requires Mn(2+) as cofactor.

The catalysed reaction is NAD(+) + (deoxyribonucleotide)n-3'-hydroxyl + 5'-phospho-(deoxyribonucleotide)m = (deoxyribonucleotide)n+m + AMP + beta-nicotinamide D-nucleotide.. DNA ligase that catalyzes the formation of phosphodiester linkages between 5'-phosphoryl and 3'-hydroxyl groups in double-stranded DNA using NAD as a coenzyme and as the energy source for the reaction. It is essential for DNA replication and repair of damaged DNA. The chain is DNA ligase from Anoxybacillus flavithermus (strain DSM 21510 / WK1).